A 287-amino-acid chain; its full sequence is Gliotoxin thiomethyltransferase GtmA (287 aa).

2 residues coordinate S-adenosyl-L-methionine: T27 and A54. A disulfide bond links C55 and C80. S-adenosyl-L-methionine contacts are provided by D82, M87, N109, A110, A126, and R248.

Belongs to the class I-like SAM-binding methyltransferase superfamily.

It is found in the cytoplasm. It catalyses the reaction a thiol + S-adenosyl-L-methionine = a methyl thioether + S-adenosyl-L-homocysteine + H(+). Its function is as follows. S-methyltransferase that catalyzes the irreversible conversion of the secondary metabolite gliotoxin to bis(methylthio)gliotoxin (BmGT). Gliotoxin, a member of the epipolythiodioxopiperazine (ETP) class of toxins, is characterized by a disulfide bridged cyclic dipeptide. Its thiol groups are essential for bioactivity, as they conjugate to sulfur-containing proteins, disturb the intracellular redox equilibrium, and generate reactive oxygen species by cycling between reduced and oxidized states. The enzyme prevents self-intoxication of the fungus by irreversible conversion of the toxic gliotoxin to a biologically inactive bis-thiomethylated derivative. Appears to negatively regulate gliotoxin biosynthesis. The protein is Gliotoxin thiomethyltransferase GtmA of Aspergillus fumigatus (strain ATCC MYA-4609 / CBS 101355 / FGSC A1100 / Af293) (Neosartorya fumigata).